The sequence spans 665 residues: Beta-galactosidase LacZ (665 aa).

Arg110 provides a ligand contact to substrate. Cys114 contributes to the Zn(2+) binding site. Asn148 contributes to the substrate binding site. Glu149 acts as the Proton donor in catalysis. Residues Cys157, Cys159, and Cys162 each contribute to the Zn(2+) site. Residue Glu303 is the Nucleophile of the active site. Substrate is bound by residues Trp311 and 351-354; that span reads EKFH.

Belongs to the glycosyl hydrolase 42 family.

The catalysed reaction is Hydrolysis of terminal non-reducing beta-D-galactose residues in beta-D-galactosides.. The chain is Beta-galactosidase LacZ from Heyndrickxia coagulans (Weizmannia coagulans).